Here is a 212-residue protein sequence, read N- to C-terminus: MIIAIDGPAASGKGTLGKRLAAHYGYRHLDTGVIYRAVAKALLDQGAELTDETRAVAAAEALDPDTFADPALKSQTVGEAASVVSALPRVRAALLNFQRQFAAHPPGAVLDGRDIGTVICPEADVKIFVVADASVRAHRRTLEALARGEPADEAQVLADILKRDERDKSRAAAPLKAADDAHLLDNSHLDIESGVRAAIDIVEAVRAGRQRV.

An ATP-binding site is contributed by 7–15 (GPAASGKGT).

Belongs to the cytidylate kinase family. Type 1 subfamily.

The protein localises to the cytoplasm. The catalysed reaction is CMP + ATP = CDP + ADP. It carries out the reaction dCMP + ATP = dCDP + ADP. This is Cytidylate kinase from Rhodopseudomonas palustris (strain BisB18).